Here is a 115-residue protein sequence, read N- to C-terminus: Variant surface glycoprotein ANTAT 1.8 (115 aa).

An N-linked (GlcNAc...) asparagine glycan is attached at Asn42. Asp92 carries the GPI-anchor amidated aspartate lipid modification. Positions 93–115 are cleaved as a propeptide — removed in mature form; that stretch reads SSILVNKQLALSVVSAAFAALLF.

The protein localises to the cell membrane. Its function is as follows. VSG forms a coat on the surface of the parasite. The trypanosome evades the immune response of the host by expressing a series of antigenically distinct VSGs from an estimated 1000 VSG genes. The protein is Variant surface glycoprotein ANTAT 1.8 of Trypanosoma brucei brucei.